Here is a 43-residue protein sequence, read N- to C-terminus: Photosystem I reaction center subunit IX (43 aa).

A helical membrane pass occupies residues 7-27 (YLSVAPVLSALWFGALAGLLI).

Belongs to the PsaJ family.

The protein localises to the plastid. The protein resides in the chloroplast thylakoid membrane. May help in the organization of the PsaE and PsaF subunits. The protein is Photosystem I reaction center subunit IX of Oenothera argillicola (Appalachian evening primrose).